Reading from the N-terminus, the 425-residue chain is MKLPADLRSYSQITRNSIAMILAGGRGTRLRQLTDWRAKPAVPFGGKFRIIDFPLSNCVNSGIRRIGVATQYKAQSLISHIQQGWGFLDGRFQEFIELLPAQQRTEESWYQGTADAVYQNIDILRSHNPDYVLILGGDHVYKMDYAKLLADHIAKSAEMTIACIDLPLEEASAFGVMSVTKDGRVTDFTEKPSVPTAVPGRPGYALVSMGIYVFNADFLFDQLIRDHDDPNSSHDFGKDLIPHLVPRSRVFTHRFSDSCVNMVSGVPYWRDVGTVEAYWEANLDLVQVTPDLNLYDQDWPIWTHQEQLPPAKFVFDNDDRRGQALDSMVSGGCIISGATVRRSLLFSNVQVRSYSVLEDSVILPNVDVGRNARLRRVVVDKNCIIPPGLEVGFDPVEDRKHFYVTETGVTLVTPEMLGQKIHYVR.

Alpha-D-glucose 1-phosphate contacts are provided by residues tyrosine 110, glycine 175, glutamate 190–lysine 191, and serine 208.

Belongs to the bacterial/plant glucose-1-phosphate adenylyltransferase family. Homotetramer.

The catalysed reaction is alpha-D-glucose 1-phosphate + ATP + H(+) = ADP-alpha-D-glucose + diphosphate. It participates in glycan biosynthesis; glycogen biosynthesis. In terms of biological role, involved in the biosynthesis of ADP-glucose, a building block required for the elongation reactions to produce glycogen. Catalyzes the reaction between ATP and alpha-D-glucose 1-phosphate (G1P) to produce pyrophosphate and ADP-Glc. This Nitrosospira multiformis (strain ATCC 25196 / NCIMB 11849 / C 71) protein is Glucose-1-phosphate adenylyltransferase.